The sequence spans 238 residues: Sugar fermentation stimulation protein homolog (238 aa).

It belongs to the SfsA family.

In Vibrio vulnificus (strain CMCP6), this protein is Sugar fermentation stimulation protein homolog.